The following is a 293-amino-acid chain: MTHTPVLLKEMLSLLSPQDGGIYVDATFGAGGYSKAILESADCKVYAIDRDETVTKFYDDLSVRYPDRIKLFIEKFSNIKNLLDSNNIEGIDGIVFDIGVSSMQLDNGDRGFSFLHDGPLDMSMDNSSYINASTFVNALREEEIANTIYNYGGERHSRKIARAIVNARKKKTIKTTFELADIVRSVVFRGKSKIDPATRTFQAIRIWVNDELGELEKGIKAASEILSENGKLIVVTFHSLEDRIVKTFFKDLCATDCKTFSLLNKKVIEASIEEVSANPRSRSAKLRAIQRLS.

Residues 31 to 33, Asp-49, Phe-76, Asp-97, and Gln-104 each bind S-adenosyl-L-methionine; that span reads GGY.

Belongs to the methyltransferase superfamily. RsmH family.

It localises to the cytoplasm. The enzyme catalyses cytidine(1402) in 16S rRNA + S-adenosyl-L-methionine = N(4)-methylcytidine(1402) in 16S rRNA + S-adenosyl-L-homocysteine + H(+). In terms of biological role, specifically methylates the N4 position of cytidine in position 1402 (C1402) of 16S rRNA. The sequence is that of Ribosomal RNA small subunit methyltransferase H from Wolbachia sp. subsp. Drosophila simulans (strain wRi).